The primary structure comprises 77 residues: Conotoxin Lt7.1 (77 aa).

The N-terminal stretch at 1 to 19 is a signal peptide; sequence MEKLTILLLVAALLMSTQG. The propeptide occupies 20–49; that stretch reads LIQSGGENRPKEKIKFLSKRKTVAESWWEG. Intrachain disulfides connect Cys-51/Cys-65, Cys-58/Cys-69, and Cys-64/Cys-74.

Belongs to the conotoxin O2 superfamily. Expressed by the venom duct.

The protein resides in the secreted. This Conus litteratus (Lettered cone) protein is Conotoxin Lt7.1.